A 907-amino-acid polypeptide reads, in one-letter code: Eukaryotic translation initiation factor 4 gamma 2 (907 aa).

An N-acetylmethionine modification is found at methionine 1. Positions 1–71 are disordered; the sequence is MESAIAEGGA…SAANNSANEK (71 aa). Phosphoserine is present on serine 11. In terms of domain architecture, MIF4G spans 78–308; the sequence is FRKVRGILNK…QDTVELREHH (231 aa). A Phosphothreonine modification is found at threonine 89. Arginine 360 carries the omega-N-methylarginine modification. Serine 395 bears the Phosphoserine mark. Lysine 431 is subject to N6-methyllysine. Serine 443 is modified (phosphoserine). Residues 498-541 are disordered; the sequence is PPSAQPPRTQTPPLGQTPQLGLKTNPPLIQEKPAKTSKKPPPSK. Over residues 503-516 the composition is skewed to polar residues; that stretch reads PPRTQTPPLGQTPQ. Arginine 505 is subject to Omega-N-methylarginine. Phosphothreonine is present on residues threonine 508 and threonine 514. An MI domain is found at 543-666; it reads ELLKLTETVV…SISELAQPLE (124 aa). Residue lysine 575 forms a Glycyl lysine isopeptide (Lys-Gly) (interchain with G-Cter in SUMO2) linkage. The W2 domain occupies 720 to 904; that stretch reads EGKGLSFLFP…ETAEEEESEE (185 aa). Serine 902 is subject to Phosphoserine.

This sequence belongs to the eukaryotic initiation factor 4G family. In terms of assembly, interacts with the serine/threonine protein kinases MKNK1 and MKNK2. Binds EIF4A and EIF3. Interacts with MIF4GD. Interacts with DAZAP2. Phosphorylation; hyperphosphorylated during mitosis.

In terms of biological role, appears to play a role in the switch from cap-dependent to IRES-mediated translation during mitosis, apoptosis and viral infection. Cleaved by some caspases and viral proteases. This is Eukaryotic translation initiation factor 4 gamma 2 from Oryctolagus cuniculus (Rabbit).